The primary structure comprises 224 residues: (S)-2-haloacid dehalogenase H-109 (224 aa).

Residue Asp-10 is the Nucleophile of the active site. An (S)-2-haloacid contacts are provided by residues 11 to 12 (LY), Arg-41, and 118 to 119 (SN). Residues 175–180 (SSNSWD) form an important for catalytic activity region.

It belongs to the HAD-like hydrolase superfamily. S-2-haloalkanoic acid dehalogenase family.

The enzyme catalyses an (S)-2-haloacid + H2O = a (2R)-2-hydroxycarboxylate + a halide anion + H(+). It catalyses the reaction (S)-2-chloropropanoate + H2O = (R)-lactate + chloride + H(+). Functionally, catalyzes the hydrolytic dehalogenation of small (S)-2-haloalkanoic acids to yield the corresponding (R)-2-hydroxyalkanoic acids. Acts on acids of short chain lengths, C(2) to C(4), with inversion of configuration at C-2. Active with 2-halogenated carboxylic acids and converts only the S-isomer (or L-isomer) of 2-chloropropionic acid with inversion of configuration to produce R-lactate (or D-isomer). The chain is (S)-2-haloacid dehalogenase H-109 from Pseudomonas putida (Arthrobacter siderocapsulatus).